Consider the following 285-residue polypeptide: Vacuolar protein sorting-associated protein 37B (285 aa).

Residues 50–170 are interaction with IST1; it reads ASNRSLAEGN…ELVLKGQRHP (121 aa). One can recognise a VPS37 C-terminal domain in the interval 84–173; the sequence is FEAYQIKKTK…LKGQRHPQAG (90 aa). Disordered regions lie at residues 167 to 215 and 242 to 285; these read QRHP…PPVP and PLPP…FILQ. 2 stretches are compositionally biased toward pro residues: residues 173 to 184 and 206 to 215; these read GAPPPPRVPEPS and RIPPPPPPVP. Over residues 250–259 the composition is skewed to polar residues; sequence PSQQGFSAQL. A compositionally biased stretch (pro residues) spans 262–275; it reads PYPPALPQRPPPRM. The span at 276–285 shows a compositional bias: low complexity; sequence APHQPGFILQ.

The protein belongs to the VPS37 family. Component of the ESCRT-I complex (endosomal sorting complex required for transport I) which consists of TSG101, VPS28, a VPS37 protein (VPS37A to -D) and MVB12A or MVB12B in a 1:1:1:1 stoichiometry. Interacts with TSG101, VPS28, MVB12A and MVB12B. Component of the ESCRT-I complex (endosomal sorting complex required for transport I) which consists of TSG101, VPS28, a VPS37 protein (VPS37A to -D) and UBAP1 in a 1:1:1:1 stoichiometry. Interacts with CEP55. Interacts with IST1.

It localises to the late endosome membrane. In terms of biological role, component of the ESCRT-I complex, a regulator of vesicular trafficking process. Required for the sorting of endocytic ubiquitinated cargos into multivesicular bodies. May be involved in cell growth and differentiation. The chain is Vacuolar protein sorting-associated protein 37B (Vps37b) from Mus musculus (Mouse).